Consider the following 93-residue polypeptide: Small ribosomal subunit protein uS19 (93 aa).

It belongs to the universal ribosomal protein uS19 family.

Functionally, protein S19 forms a complex with S13 that binds strongly to the 16S ribosomal RNA. The chain is Small ribosomal subunit protein uS19 from Phytoplasma australiense.